Here is a 389-residue protein sequence, read N- to C-terminus: Succinate--CoA ligase [ADP-forming] subunit beta (389 aa).

The 236-residue stretch at 9–244 (KQLFADYGLP…ETQEDPREVE (236 aa)) folds into the ATP-grasp domain. ATP-binding positions include Lys-46, 53-55 (GRG), Glu-99, Gly-102, and Glu-107. Mg(2+) contacts are provided by Asn-199 and Asp-213. Substrate is bound by residues Asn-264 and 321–323 (GIV).

It belongs to the succinate/malate CoA ligase beta subunit family. Heterotetramer of two alpha and two beta subunits. The cofactor is Mg(2+).

The enzyme catalyses succinate + ATP + CoA = succinyl-CoA + ADP + phosphate. It carries out the reaction GTP + succinate + CoA = succinyl-CoA + GDP + phosphate. It participates in carbohydrate metabolism; tricarboxylic acid cycle; succinate from succinyl-CoA (ligase route): step 1/1. In terms of biological role, succinyl-CoA synthetase functions in the citric acid cycle (TCA), coupling the hydrolysis of succinyl-CoA to the synthesis of either ATP or GTP and thus represents the only step of substrate-level phosphorylation in the TCA. The beta subunit provides nucleotide specificity of the enzyme and binds the substrate succinate, while the binding sites for coenzyme A and phosphate are found in the alpha subunit. In Tolumonas auensis (strain DSM 9187 / NBRC 110442 / TA 4), this protein is Succinate--CoA ligase [ADP-forming] subunit beta.